Reading from the N-terminus, the 406-residue chain is Probable transcription factor FPSE_09188 (406 aa).

Residues 1–72 form a disordered region; the sequence is MELPTYAVSQ…PKGSSSRCNG (72 aa). The segment covering 7 to 20 has biased composition (low complexity); the sequence is AVSQSLLASRSVSS.

Belongs to the bZIP family.

It is found in the nucleus. Functionally, the two putative transcription factors FPSE_09188 and FPSE_09189 could be responsible for orchestrating expression of the W493 A and B biosynthesis cluster genes. W493 A and B consist of six amino acid residues D-allo-thr, L-Ala, D-Ala, L-Gln, D-Tyr, and L-Val/L-Ile linked to a 3-hydroxy-4-methyltetradecanoic acid polyketide chain. This chain is Probable transcription factor FPSE_09188, found in Fusarium pseudograminearum (strain CS3096) (Wheat and barley crown-rot fungus).